The primary structure comprises 605 residues: UvrABC system protein C (605 aa).

Positions 13–92 (SEPGVYLMKD…IKRYRPKYNV (80 aa)) constitute a GIY-YIG domain. Residues 205–240 (EKLMELLKEKMNESSMNFRFEEAAVYRDKIKSLEEM) form the UVR domain.

This sequence belongs to the UvrC family. As to quaternary structure, interacts with UvrB in an incision complex.

The protein localises to the cytoplasm. In terms of biological role, the UvrABC repair system catalyzes the recognition and processing of DNA lesions. UvrC both incises the 5' and 3' sides of the lesion. The N-terminal half is responsible for the 3' incision and the C-terminal half is responsible for the 5' incision. This is UvrABC system protein C from Clostridioides difficile (strain 630) (Peptoclostridium difficile).